The sequence spans 771 residues: DNA polymerase 1 (771 aa).

Belongs to the DNA polymerase type-B family.

The enzyme catalyses DNA(n) + a 2'-deoxyribonucleoside 5'-triphosphate = DNA(n+1) + diphosphate. The chain is DNA polymerase 1 (polI) from Pyrococcus abyssi (strain GE5 / Orsay).